Consider the following 161-residue polypeptide: Large ribosomal subunit protein uL15 (161 aa).

The interval 1–43 is disordered; that stretch reads MKLSEIADNVGSRKKRMRIGRGIGSGKGKTGGRGGKGQTARSG. Positions 21-37 are enriched in gly residues; sequence RGIGSGKGKTGGRGGKG.

In terms of assembly, part of the 50S ribosomal subunit.

Binds to the 23S rRNA. The chain is Large ribosomal subunit protein uL15 from Rhodopseudomonas palustris (strain ATCC BAA-98 / CGA009).